Here is a 149-residue protein sequence, read N- to C-terminus: UPF0178 protein Cphy_3042 (149 aa).

Positions Gln112–Arg128 are enriched in basic residues. The tract at residues Gln112–Asp132 is disordered.

The protein belongs to the UPF0178 family.

In Lachnoclostridium phytofermentans (strain ATCC 700394 / DSM 18823 / ISDg) (Clostridium phytofermentans), this protein is UPF0178 protein Cphy_3042.